A 799-amino-acid polypeptide reads, in one-letter code: MRDWQTFPDLQKKKVSRDHLNCPATMAGSNVLWPILLAVVLLQISVAFVSGAASGGVVLSDVNNMLRDAKVVTSEKPVVHSKQETEAPESSVELLRFVDDDEDSEDISSIERQDGRTMESKKMADQVRLLTKQLNALMLRRREDYEMLEHNLRKSLRLTTNANSVDADMRSELNQLREELAALRSSQSGNKERLTVEWLQQTISEIRKQLVDLQRTASNVAQDVQQRSSTFEDLATIRSDYQQLKLDLAAQRERQQQTEVYVQELREEMLQQEQDFQHALVKLQQRTRKDGSSASVEEESGSQEANQEQTGLETTADHKRRHCRFQSEQIHQLQLAQRNLRRQVNGLRFHHIDERVRSIEVEQHRIANANFNLSSQIASLDKLHTSMLELLEDVEGLQTKMDKSIPELRHEISKLEFANAQITSEQSLIREEGTNAARSLQAMAVSVSVLQEEREGMRKLSANVDQLRTNVDRLQSLVNDEMKNKLTHLNKPHKRPHHQNVQAQMPQDDSPIDSVLAETLVSELENVETQYEAIINKLPHDCSEVHTQTDGLHLIAPAGQRHPLMTHCTADGWTTVQRRFDGSADFNRSWADYAQGFGAPGGEFWIGNEQLHHLTLDNCSRLQVQMQDIYDNVWVAEYKRFYISSRADGYRLHIAEYSGNASDALNYQQGMQFSAIDDDRDISQTHCAANYEGGWWFSHCQHANLNGRYNLGLTWFDAARNEWIAVKSSRMLVKRLPAVECQANASASGAFVSVSGSAADAAPSSGATTTTTTATAAPATVTTPKTNNSVVQFVAAGQA.

The first 51 residues, 1–51 (MRDWQTFPDLQKKKVSRDHLNCPATMAGSNVLWPILLAVVLLQISVAFVSG), serve as a signal peptide directing secretion. The disordered stretch occupies residues 287-316 (TRKDGSSASVEEESGSQEANQEQTGLETTA). Residue asparagine 372 is glycosylated (N-linked (GlcNAc...) asparagine). The span at 489–498 (LNKPHKRPHH) shows a compositional bias: basic residues. The interval 489 to 509 (LNKPHKRPHHQNVQAQMPQDD) is disordered. The region spanning 533–737 (AIINKLPHDC…SSRMLVKRLP (205 aa)) is the Fibrinogen C-terminal domain. Cysteine 542 and cysteine 568 form a disulfide bridge. N-linked (GlcNAc...) asparagine glycans are attached at residues asparagine 587, asparagine 618, and asparagine 660. A disulfide bridge links cysteine 687 with cysteine 700. 2 N-linked (GlcNAc...) asparagine glycosylation sites follow: asparagine 744 and asparagine 787.

Post-translationally, possesses five pairs of dibasic residues that may be the target of proteolytic processing.

It is found in the late endosome. Functionally, involved in regulation of neurogenesis. May encode a lateral inhibitor of R8 differentiation. In conjunction with Gp150, promotes Notch activation in response to Delta by regulating acquisition of insensitivity to Delta in a subset of cells. In Drosophila melanogaster (Fruit fly), this protein is Protein scabrous (sca).